The primary structure comprises 340 residues: Alpha-1,4-N-acetylglucosaminyltransferase (340 aa).

Residues 1-4 are Cytoplasmic-facing; sequence MRKE. The helical; Signal-anchor for type II membrane protein transmembrane segment at 5 to 25 threads the bilayer; that stretch reads LQLSLSVTLLLVCGFLYQFTL. Residues 26–340 lie on the Lumenal side of the membrane; sequence KSSCLFCLPS…VTGELGPGNK (315 aa). 2 N-linked (GlcNAc...) asparagine glycosylation sites follow: N99 and N138. The DXD motif motif lies at 167 to 169; that stretch reads DTD. 2 N-linked (GlcNAc...) asparagine glycosylation sites follow: N251 and N282.

It belongs to the glycosyltransferase 32 family. In terms of tissue distribution, detected in stomach and pancreas.

It is found in the golgi apparatus membrane. Its pathway is protein modification; protein glycosylation. In terms of biological role, catalyzes the transfer of N-acetylglucosamine (GlcNAc) to core 2 branched O-glycans. Necessary for the synthesis of type III mucin which is specifically produced in the stomach, duodenum, and pancreatic duct. May protect against inflammation-associated gastric adenocarcinomas. The chain is Alpha-1,4-N-acetylglucosaminyltransferase (A4GNT) from Homo sapiens (Human).